The primary structure comprises 444 residues: Transcriptional coactivator nsrH (444 aa).

Residues A74 to L144 form the HTH iclR-type domain. A DNA-binding region (H-T-H motif) is located at residues I104–R123.

Its subcellular location is the nucleus. Its function is as follows. Transcriptional coactivator; part of the gene cluster that mediates the biosynthesis of the tetrahydroxanthone dimer neosartorin, which exhibits antibacterial activity. This chain is Transcriptional coactivator nsrH, found in Aspergillus novofumigatus (strain IBT 16806).